Here is a 359-residue protein sequence, read N- to C-terminus: 3-dehydroquinate synthase (359 aa).

NAD(+) is bound by residues 70-75 (DGEQYK), 105-109 (GVIGD), 129-130 (TT), Lys-142, Lys-151, and 169-172 (FYKT). Glu-184, His-247, and His-264 together coordinate Zn(2+).

It belongs to the sugar phosphate cyclases superfamily. Dehydroquinate synthase family. It depends on Co(2+) as a cofactor. The cofactor is Zn(2+). Requires NAD(+) as cofactor.

The protein localises to the cytoplasm. The enzyme catalyses 7-phospho-2-dehydro-3-deoxy-D-arabino-heptonate = 3-dehydroquinate + phosphate. It functions in the pathway metabolic intermediate biosynthesis; chorismate biosynthesis; chorismate from D-erythrose 4-phosphate and phosphoenolpyruvate: step 2/7. Its function is as follows. Catalyzes the conversion of 3-deoxy-D-arabino-heptulosonate 7-phosphate (DAHP) to dehydroquinate (DHQ). The protein is 3-dehydroquinate synthase of Francisella tularensis subsp. mediasiatica (strain FSC147).